The sequence spans 318 residues: Ribosomal RNA small subunit methyltransferase H (318 aa).

S-adenosyl-L-methionine contacts are provided by residues 37 to 39, Asp-57, Phe-83, Asp-104, and Gln-111; that span reads GGH.

This sequence belongs to the methyltransferase superfamily. RsmH family.

It is found in the cytoplasm. It carries out the reaction cytidine(1402) in 16S rRNA + S-adenosyl-L-methionine = N(4)-methylcytidine(1402) in 16S rRNA + S-adenosyl-L-homocysteine + H(+). In terms of biological role, specifically methylates the N4 position of cytidine in position 1402 (C1402) of 16S rRNA. The protein is Ribosomal RNA small subunit methyltransferase H of Neisseria gonorrhoeae (strain NCCP11945).